The sequence spans 280 residues: MRSPLQSCSASEGRAVEAALSVDHAGGRSVLRRQNVGYPLHVTRGFHLDAARPDLLTLYLQSASGGLYAGDRIALDVSVARDAAFHLTTQAATVVHDGRGIGALQRQTITVDSGAFCAITTDPYVLFPGAELALDTVATVADDAVLCVADGFAVHDPRASGRAFSEFSGRLRVLRPDGHLLLHDAGRVSGDELHGALGPFAAAANLIIVAPPDRLPSVKSLQQAADGCGALAGASRAPNDAGLVLRILAPDGGTLSRATDAAFHVAAAAALGVTLSRRRK.

This sequence belongs to the UreD family. As to quaternary structure, ureD, UreF and UreG form a complex that acts as a GTP-hydrolysis-dependent molecular chaperone, activating the urease apoprotein by helping to assemble the nickel containing metallocenter of UreC. The UreE protein probably delivers the nickel.

The protein resides in the cytoplasm. Required for maturation of urease via the functional incorporation of the urease nickel metallocenter. In Bradyrhizobium sp. (strain ORS 278), this protein is Urease accessory protein UreD 3.